A 156-amino-acid chain; its full sequence is ADP-ribosylation factor-like protein 2-binding protein (156 aa).

Belongs to the ARL2BP family.

The protein resides in the cytoplasm. It localises to the mitochondrion intermembrane space. The protein localises to the cytoskeleton. Its subcellular location is the microtubule organizing center. It is found in the centrosome. The protein resides in the nucleus. It localises to the spindle. The protein localises to the cilium basal body. Plays a role as an effector of the ADP-ribosylation factor-like protein 2, ARL2. In Gallus gallus (Chicken), this protein is ADP-ribosylation factor-like protein 2-binding protein (ARL2BP).